The following is a 428-amino-acid chain: tRNA modification GTPase MnmE (428 aa).

3 residues coordinate (6S)-5-formyl-5,6,7,8-tetrahydrofolate: arginine 20, glutamate 77, and lysine 117. In terms of domain architecture, TrmE-type G spans 213–351; the sequence is GFEIALVGAP…LLEKIRSVFS (139 aa). Asparagine 223 lines the K(+) pocket. Residues 223–228, 242–248, and 267–270 each bind GTP; these read NAGKST, SEIAGTT, and DTAG. Serine 227 contacts Mg(2+). Residues serine 242, isoleucine 244, and threonine 247 each coordinate K(+). Threonine 248 provides a ligand contact to Mg(2+). Lysine 428 serves as a coordination point for (6S)-5-formyl-5,6,7,8-tetrahydrofolate.

This sequence belongs to the TRAFAC class TrmE-Era-EngA-EngB-Septin-like GTPase superfamily. TrmE GTPase family. As to quaternary structure, homodimer. Heterotetramer of two MnmE and two MnmG subunits. K(+) serves as cofactor.

The protein localises to the cytoplasm. In terms of biological role, exhibits a very high intrinsic GTPase hydrolysis rate. Involved in the addition of a carboxymethylaminomethyl (cmnm) group at the wobble position (U34) of certain tRNAs, forming tRNA-cmnm(5)s(2)U34. This is tRNA modification GTPase MnmE from Roseobacter denitrificans (strain ATCC 33942 / OCh 114) (Erythrobacter sp. (strain OCh 114)).